We begin with the raw amino-acid sequence, 506 residues long: UDP-N-acetylmuramoyl-L-alanyl-D-glutamate--2,6-diaminopimelate ligase (506 aa).

Residue serine 42 coordinates UDP-N-acetyl-alpha-D-muramoyl-L-alanyl-D-glutamate. Residue 125-131 (GTSGKTT) participates in ATP binding. UDP-N-acetyl-alpha-D-muramoyl-L-alanyl-D-glutamate is bound by residues 166-167 (TT), serine 193, and arginine 201. At lysine 233 the chain carries N6-carboxylysine. Meso-2,6-diaminopimelate is bound by residues arginine 395, 419–422 (DNPR), glycine 475, and glutamate 479. The Meso-diaminopimelate recognition motif signature appears at 419 to 422 (DNPR).

This sequence belongs to the MurCDEF family. MurE subfamily. Mg(2+) is required as a cofactor. In terms of processing, carboxylation is probably crucial for Mg(2+) binding and, consequently, for the gamma-phosphate positioning of ATP.

It is found in the cytoplasm. It catalyses the reaction UDP-N-acetyl-alpha-D-muramoyl-L-alanyl-D-glutamate + meso-2,6-diaminopimelate + ATP = UDP-N-acetyl-alpha-D-muramoyl-L-alanyl-gamma-D-glutamyl-meso-2,6-diaminopimelate + ADP + phosphate + H(+). It participates in cell wall biogenesis; peptidoglycan biosynthesis. Catalyzes the addition of meso-diaminopimelic acid to the nucleotide precursor UDP-N-acetylmuramoyl-L-alanyl-D-glutamate (UMAG) in the biosynthesis of bacterial cell-wall peptidoglycan. The chain is UDP-N-acetylmuramoyl-L-alanyl-D-glutamate--2,6-diaminopimelate ligase from Streptomyces avermitilis (strain ATCC 31267 / DSM 46492 / JCM 5070 / NBRC 14893 / NCIMB 12804 / NRRL 8165 / MA-4680).